Reading from the N-terminus, the 174-residue chain is MRLLITLFAIFALFNCSLANTATNVGEFLIGFAQGVEITLNSNSQACLSGVTSTFDEFQTAFQLIDSGFKSKSINQVKTGITDLGLAIQQVPVDYDACGITQFVEEIEEIASKLSSGVDGIVDVILKEAVEIWEHKNDLSADFKTAIADWKSSNYNGSGVAVGSIIGDLIQGAK.

Residues 1–19 form the signal peptide; the sequence is MRLLITLFAIFALFNCSLA. The N-linked (GlcNAc...) asparagine glycan is linked to N156.

The protein belongs to the Sct family. Probably contains disulfide bonds.

Its subcellular location is the secreted. It localises to the extracellular vesicle. The polypeptide is Secreted protein A (p17) (Dictyostelium discoideum (Social amoeba)).